The following is a 276-amino-acid chain: 1-(5-phosphoribosyl)-5-[(5-phosphoribosylamino)methylideneamino] imidazole-4-carboxamide isomerase (276 aa).

It belongs to the HisA/HisF family.

It is found in the cytoplasm. It carries out the reaction 1-(5-phospho-beta-D-ribosyl)-5-[(5-phospho-beta-D-ribosylamino)methylideneamino]imidazole-4-carboxamide = 5-[(5-phospho-1-deoxy-D-ribulos-1-ylimino)methylamino]-1-(5-phospho-beta-D-ribosyl)imidazole-4-carboxamide. Its pathway is amino-acid biosynthesis; L-histidine biosynthesis; L-histidine from 5-phospho-alpha-D-ribose 1-diphosphate: step 4/9. This is 1-(5-phosphoribosyl)-5-[(5-phosphoribosylamino)methylideneamino] imidazole-4-carboxamide isomerase (HIS6) from Debaryomyces hansenii (strain ATCC 36239 / CBS 767 / BCRC 21394 / JCM 1990 / NBRC 0083 / IGC 2968) (Yeast).